Here is a 136-residue protein sequence, read N- to C-terminus: Ribonuclease YqgF (136 aa).

This sequence belongs to the YqgF nuclease family. In terms of assembly, monomer; also forms low amounts of dimers. It depends on Mn(2+) as a cofactor.

It is found in the cytoplasm. Functionally, has robust sequence-specific RNase activity, acting as a 5'-3' exo/endonuclease on ssRNA substrates with minimally 3 consecutive adenine bases. Has no detectable nuclease activity on dsRNA, dsDNA or Holliday junction DNA. This is Ribonuclease YqgF from Deinococcus radiodurans (strain ATCC 13939 / DSM 20539 / JCM 16871 / CCUG 27074 / LMG 4051 / NBRC 15346 / NCIMB 9279 / VKM B-1422 / R1).